Here is a 49-residue protein sequence, read N- to C-terminus: Protein YdfW (49 aa).

Residues 16 to 49 form a disordered region; sequence PKADHPWLTRRTQSHQQVKPPKLPKKKPDPDKKD.

Functionally, may be involved in H(2) production during fermentative growth. This Escherichia coli (strain K12) protein is Protein YdfW (ydfW).